The primary structure comprises 713 residues: MGETKVIYHLDEQETPYLVKLPVPAEKVTLGDFKNVLNKPNYKFFFKSMDDDFGVVKEEISDDNAKLPCFNGRVVCWLVSADGSQSDAGSVCADNQSDLPPPIERTGGIGDSRPPSFHPNTRGSQENLDNETETDSVVSAHRERPRRKETPEHATRLNGTSKMERRRDTGGYESSSTLMSSELDSTSFFDSDEDDSTSRFSNSTEQSSASRLMRRHKRRRRKPKAPRIERSSSFSSITDSTMSLNIITVTLNMEKYNFLGISIVGQSNERGDGGIYIGSIMKGGAVAADGRIEPGDMLLQVNDTNFENMSNDDAVRVLREIVHKPGPITLTVAKCWDPSPRNCFTLPRSEPIRPIDPAAWVSHTAAMTGSYPAYGMSPSMSTITSTSSSITSSIPETERFDDFQLSIHSDMVTIVKAMRSPESGLEVRDRMWLKITIPNAFIGSDVVDWLYHHVEGFTDRREARKYASNLLKAGYIRHTVNKITFSEQCYYIFGDLCGNMANLSLNDHDGSSGTSDQDTLAPLPHPGAAPWPIAFQYQYPLPHPYSPHPGFPDPAYSYGGGSAGSQHSEGSRSSGSNRSSTEKRKEREAKGGDTKSGGSGSESDHTTRSSVRRERAASERSVPASEHSHRSHHSIAHSIRSHHTHHSFGPPGIPPLYGAPMMMMPAPASVIGPPGAPPSRDLASVPPELTASRQSFRMAMGNPTKNSGVFDFL.

The DIX domain occupies 1–82; the sequence is MGETKVIYHL…RVVCWLVSAD (82 aa). Composition is skewed to polar residues over residues 87–98 and 118–127; these read DAGSVCADNQSD and HPNTRGSQEN. A disordered region spans residues 87-235; that stretch reads DAGSVCADNQ…PRIERSSSFS (149 aa). A compositionally biased stretch (basic and acidic residues) spans 140–155; the sequence is AHRERPRRKETPEHAT. Over residues 173-189 the composition is skewed to low complexity; that stretch reads ESSSTLMSSELDSTSFF. Residues 199 to 210 are compositionally biased toward polar residues; that stretch reads RFSNSTEQSSAS. Basic residues predominate over residues 212–225; sequence LMRRHKRRRRKPKA. Residues 248–333 form the PDZ domain; the sequence is TVTLNMEKYN…KPGPITLTVA (86 aa). The DEP domain maps to 421–495; it reads PESGLEVRDR…SEQCYYIFGD (75 aa). Polar residues predominate over residues 508–518; it reads HDGSSGTSDQD. Disordered stretches follow at residues 508–527 and 545–652; these read HDGSSGTSDQDTLAPLPHPG and YSPH…GPPG. Residues 564-579 show a composition bias toward low complexity; it reads GSQHSEGSRSSGSNRS. 2 stretches are compositionally biased toward basic and acidic residues: residues 580-593 and 602-618; these read STEKRKEREAKGGD and ESDHTTRSSVRRERAAS. Positions 629–646 are enriched in basic residues; sequence HRSHHSIAHSIRSHHTHH.

The protein belongs to the DSH family.

The protein resides in the cytoplasm. Involved in the signal transduction pathway mediated by multiple Wnt genes. Required during ciliogenesis for the docking of basal bodies to the apical plasma membrane. The sequence is that of Segment polarity protein dishevelled homolog DVL-3 from Xenopus tropicalis (Western clawed frog).